A 290-amino-acid chain; its full sequence is Ribosomal protein L11 methyltransferase (290 aa).

Residues Thr136, Gly159, Asp181, and Asn228 each coordinate S-adenosyl-L-methionine.

This sequence belongs to the methyltransferase superfamily. PrmA family.

It localises to the cytoplasm. It carries out the reaction L-lysyl-[protein] + 3 S-adenosyl-L-methionine = N(6),N(6),N(6)-trimethyl-L-lysyl-[protein] + 3 S-adenosyl-L-homocysteine + 3 H(+). Its function is as follows. Methylates ribosomal protein L11. This chain is Ribosomal protein L11 methyltransferase, found in Allorhizobium ampelinum (strain ATCC BAA-846 / DSM 112012 / S4) (Agrobacterium vitis (strain S4)).